Consider the following 316-residue polypeptide: Transcription initiation factor IIB (316 aa).

The TFIIB-type zinc-finger motif lies at 11–42 (PRVTCPNHPDAILVEDYRAGDMICPECGLVVG). Zn(2+) contacts are provided by Cys-15, His-18, Cys-34, and Cys-37. 3 positions are modified to phosphoserine: Ser-70, Ser-76, and Ser-92. Repeat copies occupy residues 124–200 (MADR…LILK) and 218–294 (FCSN…LIYP). Positions 152, 154, 189, and 196 each coordinate DNA. The core promoter DNA-binding stretch occupies residues 189 to 193 (KEIGR). Lys-238 carries the N6-acetyllysine; by autocatalysis modification. The necessary for TATA box-bound complex TBP formation stretch occupies residues 244–316 (LVPGRSPISV…DTPVDKLPQL (73 aa)). Arg-248 provides a ligand contact to DNA. The interval 249–252 (SPIS) is core promoter DNA-binding. 5 residues coordinate DNA: Lys-272, Ala-281, Thr-284, Arg-286, and Arg-290. Residues 283 to 286 (VTIR) form a core promoter DNA-binding region.

Belongs to the TFIIB family. As to quaternary structure, found in a ternary complex with TATA box-bound TBP. Part of a TFIID-containing RNA polymerase II pre-initiation complex (PIC) that is composed of TBP and at least GTF2A1, GTF2A2, GTF2E1, GTF2E2, GTF2F1, GTF2H2, GTF2H3, GTF2H4, GTF2H5, GTF2B, TCEA1, ERCC2, ERCC3, TAF1, TAF2, TAF3, TAF4, TAF5, TAF6, TAF7, TAF8, TAF9, TAF10, TAF11, TAF12 and TAF13. Associates with TFIID-TFIIA (DA complex) to form TFIID-TFIIA-TFIIB (DAB complex), which is then recognized by RNA polymerase II (Pol II). Found in a RNA polymerase II initiation complex. Interacts (via C-terminus) with TBP; this interaction with TATA box-bound TBP guides Pol II into the PIC. Interacts (via N-terminus) with Pol II. Interacts (via C-terminus) with SSU72; this interaction is inhibited by SYMPK. Interacts with NR2F1; this interaction is direct. Interacts with PGR. Interacts with ESR1. Interacts with GTF2F1 (via C-terminus and preferentially via acetylated form); this interaction prevents binding of GTF2B to GTF2F2. Interacts with GTF2F2 (via N-terminus); this interaction is inhibited in presence of GTF2F1. Interacts with the transcription elongation factor TCEA2. Interacts with HSF1 (via transactivation domain). Interacts with GPBP1. Acetylated. Autoacetylated; autoacetylation at Lys-238 stimulates transcription activation.

The protein resides in the nucleus. Its subcellular location is the chromosome. The enzyme catalyses L-lysyl-[protein] + acetyl-CoA = N(6)-acetyl-L-lysyl-[protein] + CoA + H(+). Functionally, general transcription factor that plays a role in transcription initiation by RNA polymerase II (Pol II). Involved in the pre-initiation complex (PIC) formation and Pol II recruitment at promoter DNA. Together with the TATA box-bound TBP forms the core initiation complex and provides a bridge between TBP and the Pol II-TFIIF complex. Released from the PIC early following the onset of transcription during the initiation and elongation transition and reassociates with TBP during the next transcription cycle. Associates with chromatin to core promoter-specific regions. Binds to two distinct DNA core promoter consensus sequence elements in a TBP-independent manner; these IIB-recognition elements (BREs) are localized immediately upstream (BREu), 5'-[GC][GC][GA]CGCC-3', and downstream (BREd), 5'-[GA]T[TGA][TG][GT][TG][TG]-3', of the TATA box element. Modulates transcription start site selection. Also exhibits autoacetyltransferase activity that contributes to the activated transcription. In Pongo abelii (Sumatran orangutan), this protein is Transcription initiation factor IIB.